The sequence spans 186 residues: UPF0301 protein Tgr7_2910 (186 aa).

The protein belongs to the UPF0301 (AlgH) family.

The protein is UPF0301 protein Tgr7_2910 of Thioalkalivibrio sulfidiphilus (strain HL-EbGR7).